The following is a 769-amino-acid chain: Serine/threonine-protein kinase PLK4 (769 aa).

In terms of domain architecture, Protein kinase spans 10–263 (YEVYEILGKG…LDQVLQHPFM (254 aa)). ATP contacts are provided by residues 16-24 (LGKGGFASV) and lysine 39. Catalysis depends on aspartate 134, which acts as the Proton acceptor. Disordered regions lie at residues 280-304 (SSDSGLVTMSSNGGSNRSNIPSSYG), 337-380 (PQQR…LDIP), and 592-651 (APLT…VLSS). Residues 337 to 371 (PQQRPQSASHNKPTSDFFSGISNDPRTMAPSSPTK) show a composition bias toward polar residues. In terms of domain architecture, Cryptic POLO box 1 (CPB1) spans 374–491 (KKRLDIPPLN…ARFVQMVKAK (118 aa)). Residues 492–595 (TPKITYYSEK…GRRPANAPLT (104 aa)) enclose the Cryptic POLO box 2 (CPB2) domain. Over residues 605–648 (TKENQLYSNISSPNTPQTPHQMPSFAMSTASHTSAGNPLTQRPV) the composition is skewed to polar residues. The POLO box domain occupies 662–745 (AMKKCTIAGV…MPAILRELNA (84 aa)).

This sequence belongs to the protein kinase superfamily. Ser/Thr protein kinase family. CDC5/Polo subfamily. As to quaternary structure, homodimer. Ubiquitinated; leading to its degradation by the proteasome.

It localises to the cytoplasm. It is found in the cytoskeleton. The protein localises to the microtubule organizing center. The protein resides in the centrosome. Its subcellular location is the centriole. It catalyses the reaction L-seryl-[protein] + ATP = O-phospho-L-seryl-[protein] + ADP + H(+). The enzyme catalyses L-threonyl-[protein] + ATP = O-phospho-L-threonyl-[protein] + ADP + H(+). Functionally, serine/threonine-protein kinase that plays a central role in centriole duplication. Able to trigger procentriole formation on the surface of the mother centriole cylinder, leading to the recruitment of centriole biogenesis proteins. When overexpressed, it is able to induce centrosome amplification through the simultaneous generation of multiple procentrioles adjoining each parental centriole during S phase. This is Serine/threonine-protein kinase PLK4 (SAK) from Aedes aegypti (Yellowfever mosquito).